A 245-amino-acid polypeptide reads, in one-letter code: Chymotrypsinogen A (245 aa).

5 disulfides stabilise this stretch: C1/C122, C42/C58, C136/C201, C168/C182, and C191/C220. The propeptide occupies 14 to 15; the sequence is SR. The region spanning 16–243 is the Peptidase S1 domain; sequence IVNGEEAVPG…LVNWVQQTLA (228 aa). Residues H57 and D102 each act as charge relay system in the active site. A propeptide spanning residues 147 to 148 is cleaved from the precursor; it reads TN. S195 serves as the catalytic Charge relay system.

Belongs to the peptidase S1 family.

Its subcellular location is the secreted. The protein resides in the extracellular space. It catalyses the reaction Preferential cleavage: Tyr-|-Xaa, Trp-|-Xaa, Phe-|-Xaa, Leu-|-Xaa.. The protein is Chymotrypsinogen A of Bos taurus (Bovine).